We begin with the raw amino-acid sequence, 549 residues long: Cytochrome bc1 complex cytochrome b subunit (549 aa).

Residues 45-65 (FLLGEIALYSFVVLLITGVYL) traverse the membrane as a helical segment. Residues His-114 and His-128 each contribute to the heme site. 3 helical membrane-spanning segments follow: residues 118–138 (ALMF…TGAF), 146–166 (WVIG…GYSL), and 189–209 (VIGT…TILI). Heme-binding residues include His-216 and His-231. Helical transmembrane passes span 217-237 (ILLL…LVWF), 266-286 (SGAF…LLQI), 335-355 (PVWV…YPFL), 381-401 (IGAM…NDII), and 418-438 (IGMV…CIGL).

Belongs to the cytochrome b family. The cytochrome bc1 complex is composed of a cytochrome b (QcrB), the Rieske iron-sulfur protein (QcrA) and a diheme cytochrome c (QcrC) subunit. The cofactor is heme.

The protein localises to the cell membrane. It carries out the reaction a quinol + 2 Fe(III)-[cytochrome c](out) = a quinone + 2 Fe(II)-[cytochrome c](out) + 2 H(+)(out). In terms of biological role, cytochrome b subunit of the cytochrome bc1 complex, an essential component of the respiratory electron transport chain required for ATP synthesis. The bc1 complex catalyzes the oxidation of ubiquinol and the reduction of cytochrome c in the respiratory chain. The bc1 complex operates through a Q-cycle mechanism that couples electron transfer to generation of the proton gradient that drives ATP synthesis. The cytochrome b subunit contains two ubiquinol reactive sites: the oxidation (QP) site and the reduction (QN) site. The polypeptide is Cytochrome bc1 complex cytochrome b subunit (qcrB) (Mycobacterium bovis (strain ATCC BAA-935 / AF2122/97)).